Consider the following 218-residue polypeptide: tRNA (cytidine(56)-2'-O)-methyltransferase (218 aa).

S-adenosyl-L-methionine-binding positions include Leu-81, 106 to 110, and 124 to 131; these read GAEKV and IGNQPHSE. The disordered stretch occupies residues 170–218; it reads KVGEEGPSGGAPGVRAERGRGGRGEGVQGADEVRGHKRGATDRDLGDET. The span at 200–218 shows a compositional bias: basic and acidic residues; sequence DEVRGHKRGATDRDLGDET.

It belongs to the aTrm56 family. In terms of assembly, homodimer.

It is found in the cytoplasm. The catalysed reaction is cytidine(56) in tRNA + S-adenosyl-L-methionine = 2'-O-methylcytidine(56) in tRNA + S-adenosyl-L-homocysteine + H(+). Its function is as follows. Specifically catalyzes the AdoMet-dependent 2'-O-ribose methylation of cytidine at position 56 in tRNAs. The polypeptide is tRNA (cytidine(56)-2'-O)-methyltransferase (Ignicoccus hospitalis (strain KIN4/I / DSM 18386 / JCM 14125)).